The chain runs to 391 residues: Phosphoglycerate kinase (391 aa).

Residues 21–23 (DLN), Arg36, 59–62 (HLGR), Arg113, and Arg146 each bind substrate. ATP is bound by residues Lys197, Glu319, and 345-348 (GGDT).

The protein belongs to the phosphoglycerate kinase family. As to quaternary structure, monomer.

It is found in the cytoplasm. The enzyme catalyses (2R)-3-phosphoglycerate + ATP = (2R)-3-phospho-glyceroyl phosphate + ADP. Its pathway is carbohydrate degradation; glycolysis; pyruvate from D-glyceraldehyde 3-phosphate: step 2/5. In Shewanella denitrificans (strain OS217 / ATCC BAA-1090 / DSM 15013), this protein is Phosphoglycerate kinase.